The following is a 204-amino-acid chain: dITP/XTP pyrophosphatase (204 aa).

A substrate-binding site is contributed by 11-16 (SRNRKK). Asp76 acts as the Proton acceptor in catalysis. Asp76 is a binding site for Mg(2+). Residues Ser77, 158–161 (FGYD), Lys181, and 186–187 (HR) contribute to the substrate site.

This sequence belongs to the HAM1 NTPase family. As to quaternary structure, homodimer. Mg(2+) is required as a cofactor.

The catalysed reaction is XTP + H2O = XMP + diphosphate + H(+). It catalyses the reaction dITP + H2O = dIMP + diphosphate + H(+). It carries out the reaction ITP + H2O = IMP + diphosphate + H(+). Pyrophosphatase that catalyzes the hydrolysis of nucleoside triphosphates to their monophosphate derivatives, with a high preference for the non-canonical purine nucleotides XTP (xanthosine triphosphate), dITP (deoxyinosine triphosphate) and ITP. Seems to function as a house-cleaning enzyme that removes non-canonical purine nucleotides from the nucleotide pool, thus preventing their incorporation into DNA/RNA and avoiding chromosomal lesions. This is dITP/XTP pyrophosphatase from Mycobacterium tuberculosis (strain CDC 1551 / Oshkosh).